Reading from the N-terminus, the 389-residue chain is MSAVIVNTVEQCGYFNRGQCQSCRHIQVPMAQQLMAKSLELQQLLKPFVAPSAAIFYPPVTGEATAFRNKAKMVVLGAAHAPVLGIVSPSGEAVSLCDCLLYPSDMQKLLHRLTQFVQQAGIPPYRVDKAKGELKFILLTRSQVRGEYLLRFVLRSHNSIERIERALPTLLAEYPQINVVSVNIQPIHMAILEGDEEIFLTENTRLEERFNDVPLFIRPKSFFQTNPQVAAQLYQTAREWVAEFAPKSLWDLFCGVGGFGLHCATKDIALTGIEIEAEAISCAQISANLMGLEKVQFMALDSTDFAQGKNAADKPDLIIVNPPRRGIGEALCQSLSEFAPRAILYSSCNPKTLAKDLEHIQGYHLTKVQLFDLFPHTDHFEVLAMLVKD.

[4Fe-4S] cluster-binding residues include Cys-12, Cys-20, Cys-23, and Cys-99. S-adenosyl-L-methionine contacts are provided by Gln-224, Phe-253, Glu-274, and Asn-321. Cys-348 serves as the catalytic Nucleophile.

Belongs to the class I-like SAM-binding methyltransferase superfamily. RNA M5U methyltransferase family. RlmC subfamily.

The catalysed reaction is uridine(747) in 23S rRNA + S-adenosyl-L-methionine = 5-methyluridine(747) in 23S rRNA + S-adenosyl-L-homocysteine + H(+). Its function is as follows. Catalyzes the formation of 5-methyl-uridine at position 747 (m5U747) in 23S rRNA. The protein is 23S rRNA (uracil(747)-C(5))-methyltransferase RlmC of Shewanella sp. (strain W3-18-1).